The primary structure comprises 668 residues: DNA ligase (668 aa).

Residues 34–38 (DAEYD), 83–84 (SL), and Glu-113 each bind NAD(+). Lys-115 serves as the catalytic N6-AMP-lysine intermediate. The NAD(+) site is built by Arg-136, Glu-170, Lys-286, and Lys-310. Positions 404, 407, 422, and 427 each coordinate Zn(2+). Residues 590-668 (DSDSYFAGKT…EEQLMGELKK (79 aa)) form the BRCT domain.

This sequence belongs to the NAD-dependent DNA ligase family. LigA subfamily. Mg(2+) is required as a cofactor. The cofactor is Mn(2+).

It catalyses the reaction NAD(+) + (deoxyribonucleotide)n-3'-hydroxyl + 5'-phospho-(deoxyribonucleotide)m = (deoxyribonucleotide)n+m + AMP + beta-nicotinamide D-nucleotide.. DNA ligase that catalyzes the formation of phosphodiester linkages between 5'-phosphoryl and 3'-hydroxyl groups in double-stranded DNA using NAD as a coenzyme and as the energy source for the reaction. It is essential for DNA replication and repair of damaged DNA. This Bacillus subtilis (strain 168) protein is DNA ligase.